The following is a 262-amino-acid chain: MRIALVVEYDGSQYHGWQAQTGLHTIQQAVEFALSKVADSSISVVCAGRTDTGVHATNQVIHFDCEKDRSIRAWIHGANTFLPKDICVKWGKEMPENFHARYSAVSRRYRYVIYNGAIRPGLLRGNVTWQYRQLDHRLMQQGGQCLLGENDFTSFRSVECQSNTPMRNIHQLQVTRHGDLVVLDITANAFLHHMVRNIAGVLIAVGSGKHPVGWVKDVLNAKDRKLGAETAPSYGLYLVQVTYPKEFGLLQNNPGPLFLWEK.

Residue Asp-51 is the Nucleophile of the active site. Tyr-109 is a binding site for substrate.

It belongs to the tRNA pseudouridine synthase TruA family. In terms of assembly, homodimer.

The enzyme catalyses uridine(38/39/40) in tRNA = pseudouridine(38/39/40) in tRNA. Formation of pseudouridine at positions 38, 39 and 40 in the anticodon stem and loop of transfer RNAs. The protein is tRNA pseudouridine synthase A of Legionella pneumophila (strain Paris).